A 255-amino-acid polypeptide reads, in one-letter code: MDNVSSAHEYIEHHLTFLTLGKGFWSINIDSMIMVWMVGLLFIGVFRYVAIRGTKGVPGRLQCFIEITFDFVNNLVKEIFKTEDKLIGPLALTIFVWVFLMNSIDLLPVDFVPALTRLFGVEHFRDLPSADVNVPVSMALGVFILIIGYTLKNKGIVGFIKELTTQPFEHPLLYPVNFLLELITLISKPISLGLRLFGNMYAGEMIFILIALMPWWMQWALSVPWALFHILIVFLQAFIFMVLTIVYLAMATEEH.

Helical transmembrane passes span 26–46, 86–106, 131–151, 205–225, and 230–250; these read SINIDSMIMVWMVGLLFIGVF, LIGPLALTIFVWVFLMNSIDL, DVNVPVSMALGVFILIIGYTL, MIFILIALMPWWMQWALSVPW, and ILIVFLQAFIFMVLTIVYLAM.

This sequence belongs to the ATPase A chain family. In terms of assembly, F-type ATPases have 2 components, CF(1) - the catalytic core - and CF(0) - the membrane proton channel. CF(1) has five subunits: alpha(3), beta(3), gamma(1), delta(1), epsilon(1). CF(0) has three main subunits: a(1), b(2) and c(9-12). The alpha and beta chains form an alternating ring which encloses part of the gamma chain. CF(1) is attached to CF(0) by a central stalk formed by the gamma and epsilon chains, while a peripheral stalk is formed by the delta and b chains.

The protein resides in the cell inner membrane. Functionally, key component of the proton channel; it plays a direct role in the translocation of protons across the membrane. The polypeptide is ATP synthase subunit a 2 (Photobacterium profundum (strain SS9)).